A 161-amino-acid polypeptide reads, in one-letter code: uncharacterized protein (161 aa).

This is an uncharacterized protein from Schizosaccharomyces pombe (strain 972 / ATCC 24843) (Fission yeast).